The following is a 248-amino-acid chain: Tyrosine recombinase XerD-like (248 aa).

The region spanning 1–72 (MKSYIEPFIA…TANQFLYYLY (72 aa)) is the Core-binding (CB) domain. In terms of domain architecture, Tyr recombinase spans 85-248 (DTMKVMRTEK…PVTLEKYYKS (164 aa)). Active-site residues include Lys-149 and Arg-213. The active-site O-(3'-phospho-DNA)-tyrosine intermediate is the Tyr-245.

This sequence belongs to the 'phage' integrase family. XerD-like subfamily.

The protein localises to the cytoplasm. Functionally, putative tyrosine recombinase. Not involved in the cutting and rejoining of the recombining DNA molecules on dif(SL) site. The sequence is that of Tyrosine recombinase XerD-like from Streptococcus pyogenes serotype M28 (strain MGAS6180).